We begin with the raw amino-acid sequence, 399 residues long: Bone morphogenetic protein 8B (399 aa).

An N-terminal signal peptide occupies residues M1–G19. Residues G20 to R260 constitute a propeptide that is removed on maturation. Residues N155 and N340 are each glycosylated (N-linked (GlcNAc...) asparagine). 3 disulfides stabilise this stretch: C298–C364, C327–C396, and C331–C398.

This sequence belongs to the TGF-beta family. Homodimer; disulfide-linked. As to expression, expressed in testis. Expressed in decidual cells of the uterus and in trophoblast cells of the labyrinthine region of the placenta and in the inner root sheath of hair follicles of early postnatal skin. Expressed in the extraembryonic ectoderm in pregastrula and gastrula stage mouse embryos. Expressed in brown adipose tissue and brain.

It localises to the secreted. Induces cartilage and bone formation. May be the osteoinductive factor responsible for the phenomenon of epithelial osteogenesis. Plays a role in calcium regulation and bone homeostasis. Involved in the generation of primordial germ cells; this function involves Bmp4 in a synergistic manner though separate receptor complexes seem to be involved. Required for the initiation and maintenance of spermatogenesis. Signaling protein involved in regulation of thermogenesis and energy balance. Proposed to increase the peripheral response of brown adipose tissue (BAT) to adrenergic stimulation while acting centrally in the hypothalamus to increase sympathetic output to BAT. This chain is Bone morphogenetic protein 8B (Bmp8b), found in Mus musculus (Mouse).